The chain runs to 390 residues: S-adenosylmethionine synthase 3 (390 aa).

Glu9 is a binding site for Mg(2+). His15 is an ATP binding site. Glu43 is a binding site for K(+). L-methionine is bound by residues Glu56 and Gln99. Residues 167 to 169 (DGK), 235 to 238 (SGRF), Asp246, 252 to 253 (RK), Ala269, Lys273, and Lys277 each bind ATP. Asp246 lines the L-methionine pocket. Lys277 contributes to the L-methionine binding site.

Belongs to the AdoMet synthase family. In terms of assembly, homotetramer. Interacts with GRF3. It depends on Mn(2+) as a cofactor. Mg(2+) is required as a cofactor. The cofactor is Co(2+). K(+) serves as cofactor.

The protein localises to the cytoplasm. It carries out the reaction L-methionine + ATP + H2O = S-adenosyl-L-methionine + phosphate + diphosphate. It functions in the pathway amino-acid biosynthesis; S-adenosyl-L-methionine biosynthesis; S-adenosyl-L-methionine from L-methionine: step 1/1. Its activity is regulated as follows. Inhibited by 5,5'-dithiobis-2-nitrobenzoic acid (DTNB) and N-ethylmaleimide (NEM) (in vitro). In terms of biological role, catalyzes the formation of S-adenosylmethionine from methionine and ATP. The reaction comprises two steps that are both catalyzed by the same enzyme: formation of S-adenosylmethionine (AdoMet) and triphosphate, and subsequent hydrolysis of the triphosphate. Involved in the biosynthesis of lignin. This is S-adenosylmethionine synthase 3 (METK3) from Arabidopsis thaliana (Mouse-ear cress).